An 834-amino-acid chain; its full sequence is Protein EFR3 homolog cmp44E (834 aa).

Residues N120–N156 form an HEAT repeat. Residues L595 to I612 form a helical membrane-spanning segment.

Belongs to the EFR3 family. Expression during embryogenesis is ubiquitous with notably higher levels in the CNS and brain.

Its subcellular location is the membrane. An essential gene required for embryogenesis; required for cell viability. The sequence is that of Protein EFR3 homolog cmp44E (stmA) from Drosophila melanogaster (Fruit fly).